The sequence spans 744 residues: NAD(P)H-quinone oxidoreductase subunit 5, chloroplastic (744 aa).

16 consecutive transmembrane segments (helical) span residues 9 to 29 (WIIPFLPLPVPMLIGLGLLFF), 40 to 60 (WAFQSVLLLSIVMIFSINLSI), 89 to 109 (IDPLTSIMSILITTVGIMVLI), 125 to 145 (FAYMSFFSTSMLGLVTSSNLI), 147 to 167 (IYIFWELVGIRSYLLIGFWFT), 185 to 205 (GDFGLLLGILGFYWITGSFEF), 219 to 239 (NEVNFLFVTLCAVLLFAGAIA), 258 to 278 (TPISALIHAATMVAAGIFLVA), 290 to 312 (IMNFISLIGIITVFLGATLALAQ), 327 to 347 (LGYMMLALGMGSYRSALFHLI), 354 to 374 (ALLFLGSGSVIHSMETLVGYC), 396 to 416 (TSFFLGTLSLCGIPPLACFWS), 425 to 445 (WLYSPIFAIIAWSTAGLTAFY), 549 to 569 (LFPILILVLFTLFVGFLGIPF), 608 to 628 (VFSVSISSFGIFIAFFLYKPV), and 724 to 744 (YLFFYFSYLSFFLLIYYFFHF).

The protein belongs to the complex I subunit 5 family. NDH is composed of at least 16 different subunits, 5 of which are encoded in the nucleus.

The protein localises to the plastid. It is found in the chloroplast thylakoid membrane. The catalysed reaction is a plastoquinone + NADH + (n+1) H(+)(in) = a plastoquinol + NAD(+) + n H(+)(out). It catalyses the reaction a plastoquinone + NADPH + (n+1) H(+)(in) = a plastoquinol + NADP(+) + n H(+)(out). Functionally, NDH shuttles electrons from NAD(P)H:plastoquinone, via FMN and iron-sulfur (Fe-S) centers, to quinones in the photosynthetic chain and possibly in a chloroplast respiratory chain. The immediate electron acceptor for the enzyme in this species is believed to be plastoquinone. Couples the redox reaction to proton translocation, and thus conserves the redox energy in a proton gradient. This chain is NAD(P)H-quinone oxidoreductase subunit 5, chloroplastic (ndhF), found in Gerbera jamesonii (Transvaal daisy).